Here is a 168-residue protein sequence, read N- to C-terminus: Endoribonuclease YbeY (168 aa).

Zn(2+) contacts are provided by H125, H129, and H135.

The protein belongs to the endoribonuclease YbeY family. It depends on Zn(2+) as a cofactor.

The protein localises to the cytoplasm. Single strand-specific metallo-endoribonuclease involved in late-stage 70S ribosome quality control and in maturation of the 3' terminus of the 16S rRNA. This Rhodopseudomonas palustris (strain BisB18) protein is Endoribonuclease YbeY.